A 623-amino-acid polypeptide reads, in one-letter code: MGEKQRKLLVLYASQTGNALDAAERIGREAERRGLPASVVSTDEFDTSSLPHHEEAVVFVVSTTGQGDSPDSFKAFWRFLLQRNLGNYWLQQVRYAVFGLGDSGYQKYNFVAKKLDKRLSDLGATTIIEKGLGDDQHPSGYEGTLDPWMLSLWRTLYQINPKYFPKGPDVKIPQDEVIDKPKYRILFHKQEKLEPKLLSDSDIIQRARGMSPGKLFKDKSKPDCFLKMTRNEVLTKAESTKDVRHFEFQFVSSTIEYEVGDVVELLPSQNSSVVDAFIERCGLDPESFITVGPRETENSSFSEEMITQIPIKLKTFVELTMDVTSASPRRYFFEIMSFYATAEHEKERLQYFASPEGRDDLYNYNQKERRSILEVLEDFPSVQIPFDWLVQLVPPLKPRAFSISSSPLAHPAAVHLTVSIVSWITPYKRTRKGLCSSWLASLAPEQEVNIPVWFHKGSLPAPSQSLPLILVGPGTGCAPFRGFIAERAVQAQSSPVAPVMFFFGCRNKDTDFLYRDFWESHAREGGMLSEGKGGGFYTAFSRDQPKKVYVQHKIREMSKRVWDLLCDGAAVYVAGSSTKMPCDVMSAFEDIVSEETGGGSKEVASRWLKALEKTGRYNVEAWS.

Positions 8–153 (LLVLYASQTG…TLDPWMLSLW (146 aa)) constitute a Flavodoxin-like domain. Residues 14 to 19 (SQTGNA), 62 to 65 (STTG), and Asp135 each bind FMN. One can recognise an FAD-binding FR-type domain in the interval 221-467 (KPDCFLKMTR…SLPAPSQSLP (247 aa)). FAD is bound by residues Arg369, 399-402 (RAFS), and 433-436 (GLCS). NADP(+) is bound by residues Thr475, 541–542 (SR), 547–551 (KVYVQ), and Asp583. FAD is bound at residue Trp622.

This sequence belongs to the NADPH-dependent diflavin oxidoreductase NDOR1 family. The protein in the N-terminal section; belongs to the flavodoxin family. In the C-terminal section; belongs to the flavoprotein pyridine nucleotide cytochrome reductase family. In terms of assembly, interacts with At5g18400. FAD is required as a cofactor. It depends on FMN as a cofactor. In terms of tissue distribution, widely expressed.

It localises to the cytoplasm. It is found in the nucleus. It catalyses the reaction 2 oxidized [2Fe-2S]-[protein] + NADPH = 2 reduced [2Fe-2S]-[protein] + NADP(+) + H(+). NADPH-dependent reductase which is a central component of the cytosolic iron-sulfur (Fe-S) protein assembly (CIA) machinery. Transfers electrons from NADPH via its FAD and FMN prosthetic groups to the [2Fe-2S] cluster of the anamorsin/DRE2 homolog, another key component of the CIA machinery. In turn, this reduced cluster provides electrons for assembly of cytosolic iron-sulfur cluster proteins. Catalyzes the NADP-dependent reduction of cytochrome c, but not cytochrome P450 in vitro. Required for embryo development. The protein is NADPH-dependent diflavin oxidoreductase 1 (ATR3) of Arabidopsis thaliana (Mouse-ear cress).